Here is a 766-residue protein sequence, read N- to C-terminus: ABC-type oligopeptide transporter ABCB9 (766 aa).

Transmembrane regions (helical) follow at residues Val-7–Phe-27, Val-47–Gly-67, Leu-84–Phe-104, Phe-116–Leu-136, Val-185–Leu-205, Phe-225–Ile-245, Val-319–Ile-339, and Ser-416–Ile-436. Residues Leu-188–Gln-471 enclose the ABC transmembrane type-1 domain. Residues Val-504–Arg-740 enclose the ABC transporter domain. Gly-539 to Ser-546 provides a ligand contact to ATP.

Belongs to the ABC transporter superfamily. ABCB family. MHC peptide exporter (TC 3.A.1.209) subfamily. As to quaternary structure, homodimer. Interacts (via TMD0 region) with LAMP1; this interaction strongly stabilizes ABCB9 and protects ABCB9 against lysosomal degradation. Interacts (via TMD0 region) with LAMP2 (isoform LAMP-2B). Interacts (via TMD0) with YIF1B; this interaction allows (but is not essential) the ER-to-Golgi trafficking and strongly depends on a salt bridge within TMD0. Highly expressed in testis, and at moderate levels in brain, spinal cord, and thyroid. Not expressed in monocytes but strongly expressed during differentiation of monocytes to dendritic cells and macrophages.

The protein localises to the lysosome membrane. It carries out the reaction a [oligopeptide](in) + ATP + H2O = a [oligopeptide](out) + ADP + phosphate + H(+). Its activity is regulated as follows. Transport activity is limited by threshold levels of luminal peptide. ATP hydrolysis is reduced in the presence of the spatial challenging 18-mer peptide by 50% and the branched 16-mer peptide by 75%. Transport rate of the longer peptides is strongly reduced. ATP-dependent low-affinity peptide transporter which translocates a broad spectrum of peptides from the cytosol to the lysosomal lumen for degradation. Displays a broad peptide length specificity from 6-mer up to at least 59-mer peptides with an optimum of 23-mers. Binds and transports smaller and larger peptides with the same affinity. Favors positively charged, aromatic or hydrophobic residues in the N- and C-terminal positions whereas negatively charged residues as well as asparagine and methionine are not favored. The sequence is that of ABC-type oligopeptide transporter ABCB9 from Homo sapiens (Human).